The chain runs to 53 residues: Insulin (53 aa).

Residues 1–30 (DVEPLLGFLSPKSGQENEVDDFPYKGQGEL) constitute a propeptide, c peptide. C38 and C43 are joined by a disulfide.

The protein belongs to the insulin family. Heterodimer of a B chain and an A chain linked by two disulfide bonds.

It is found in the secreted. Its function is as follows. Insulin decreases blood glucose concentration. It increases cell permeability to monosaccharides, amino acids and fatty acids. It accelerates glycolysis, the pentose phosphate cycle, and glycogen synthesis in liver. This Anguilla anguilla (European freshwater eel) protein is Insulin (ins).